The sequence spans 71 residues: Large ribosomal subunit protein bL31 (71 aa).

4 residues coordinate Zn(2+): Cys-16, Cys-18, Cys-37, and Cys-40.

This sequence belongs to the bacterial ribosomal protein bL31 family. Type A subfamily. In terms of assembly, part of the 50S ribosomal subunit. The cofactor is Zn(2+).

Its function is as follows. Binds the 23S rRNA. The sequence is that of Large ribosomal subunit protein bL31 from Pectobacterium atrosepticum (strain SCRI 1043 / ATCC BAA-672) (Erwinia carotovora subsp. atroseptica).